The primary structure comprises 314 residues: 2-methoxy-6-polyprenyl-1,4-benzoquinol methylase, mitochondrial (314 aa).

The transit peptide at 1 to 19 directs the protein to the mitochondrion; sequence MLQSLNRSVRYLSTSIGSR. Residues Thr109, Asp154, 186 to 187, and Ser203 contribute to the S-adenosyl-L-methionine site; that span reads NS.

The protein belongs to the class I-like SAM-binding methyltransferase superfamily. MenG/UbiE family. Component of a multi-subunit COQ enzyme complex.

It localises to the mitochondrion inner membrane. The catalysed reaction is a 2-methoxy-6-(all-trans-polyprenyl)benzene-1,4-diol + S-adenosyl-L-methionine = a 5-methoxy-2-methyl-3-(all-trans-polyprenyl)benzene-1,4-diol + S-adenosyl-L-homocysteine + H(+). It functions in the pathway cofactor biosynthesis; ubiquinone biosynthesis. Methyltransferase required for the conversion of 2-polyprenyl-6-methoxy-1,4-benzoquinol (DDMQH2) to 2-polyprenyl-3-methyl-6-methoxy-1,4-benzoquinol (DMQH2). The sequence is that of 2-methoxy-6-polyprenyl-1,4-benzoquinol methylase, mitochondrial from Dictyostelium discoideum (Social amoeba).